The primary structure comprises 448 residues: GA-binding protein subunit beta-2 (448 aa).

5 ANK repeats span residues 5 to 34 (DLGK…PFTT), 37 to 66 (LGTS…SRDA), 70 to 99 (VDRT…DVNA), 103 to 132 (LKMT…DVHA), and 136 to 166 (FDKS…QVNV). Ser256 carries the phosphoserine modification. Disordered stretches follow at residues 325-354 (EEEE…GNER) and 420-448 (ELEE…TVSS). A compositionally biased stretch (basic and acidic residues) spans 337–354 (RIGEKTNSVEESKEGNER). Positions 345–395 (VEESKEGNERELLQQQLQEANRRAQEYRHQLLKKEQEAEQYRLKLEAIARQ) form a coiled coil. Polar residues predominate over residues 428–448 (VTGSAGTTEPHTRVSMATVSS).

Heterotetramer of two alpha and two beta subunits. The C-terminal is necessary for the formation of a heterotetrameric GABP-alpha-2/beta-2 complex, and also facilitates homotypic dimerization. Interacts with ADGRB2.

The protein resides in the nucleus. Functionally, may function as transcription factor capable of interacting with purine rich repeats (GA repeats). This Homo sapiens (Human) protein is GA-binding protein subunit beta-2 (GABPB2).